The following is a 173-amino-acid chain: MQKVKLPLTLDPVRTAQKRLDYQGIYTPDQVERVAESVVSVDSDVECSMSFAIDNQRLAVLTGDAVVTVSLECQRCGKPFTHQVHTTYCFSPVRSDEQAEALPEAYEPIEVNEFGEIDLLATVEDEIILALPVVPVHDSEHCEVSEADMVFGELPDEAQKPNPFAVLASLKRK.

This sequence belongs to the DUF177 domain family.

Functionally, plays a role in synthesis, processing and/or stability of 23S rRNA. The polypeptide is Large ribosomal RNA subunit accumulation protein YceD (yceD) (Salmonella typhi).